A 168-amino-acid chain; its full sequence is ATP synthase subunit b (168 aa).

A helical transmembrane segment spans residues 10-30 (LYLGDMLFYLVSFLIMAALVW). A disordered region spans residues 61 to 80 (EAQKLAAKRQEELKGSRQEA).

This sequence belongs to the ATPase B chain family. F-type ATPases have 2 components, F(1) - the catalytic core - and F(0) - the membrane proton channel. F(1) has five subunits: alpha(3), beta(3), gamma(1), delta(1), epsilon(1). F(0) has three main subunits: a(1), b(2) and c(10-14). The alpha and beta chains form an alternating ring which encloses part of the gamma chain. F(1) is attached to F(0) by a central stalk formed by the gamma and epsilon chains, while a peripheral stalk is formed by the delta and b chains.

It localises to the cell membrane. Its function is as follows. F(1)F(0) ATP synthase produces ATP from ADP in the presence of a proton or sodium gradient. F-type ATPases consist of two structural domains, F(1) containing the extramembraneous catalytic core and F(0) containing the membrane proton channel, linked together by a central stalk and a peripheral stalk. During catalysis, ATP synthesis in the catalytic domain of F(1) is coupled via a rotary mechanism of the central stalk subunits to proton translocation. Component of the F(0) channel, it forms part of the peripheral stalk, linking F(1) to F(0). The polypeptide is ATP synthase subunit b (Limosilactobacillus fermentum (strain NBRC 3956 / LMG 18251) (Lactobacillus fermentum)).